The primary structure comprises 613 residues: Kelch-like protein 36 (613 aa).

The 68-residue stretch at 45 to 112 folds into the BTB domain; sequence CDVVLVVEEQ…LYSSELELDG (68 aa). Residues 147 to 249 form the BACK domain; that stretch reads YLYLQELASI…PEDILLQRVK (103 aa). Kelch repeat units follow at residues 294–343, 344–395, 396–442, 444–491, 492–544, and 545–593; these read CLLF…VLGG, FIFI…SIED, MLVA…IYKD, VYIS…SLGD, SIYS…VWQG, and RIYI…VCAL.

As to quaternary structure, interacts with CUL3.

It functions in the pathway protein modification; protein ubiquitination. Probable substrate-specific adapter of an E3 ubiquitin-protein ligase complex which mediates the ubiquitination and subsequent proteasomal degradation of target proteins. The sequence is that of Kelch-like protein 36 (Klhl36) from Mus musculus (Mouse).